A 666-amino-acid polypeptide reads, in one-letter code: ATP synthase subunit alpha 2 (666 aa).

ATP is bound at residue 182 to 189; sequence GDRATGKT. The segment at 527-666 is disordered; that stretch reads MPAEDAAGDI…DAEAEARHKR (140 aa). Over residues 545-590 the composition is skewed to basic and acidic residues; it reads ARGDADRDADHGANREVSREVSPEASREVSREVSCEVSHEADRDAA. Residues 591–601 are compositionally biased toward low complexity; the sequence is ADAARVAGRAP. Positions 623–641 are enriched in basic and acidic residues; the sequence is ADGDRASASRPRPDARGDA.

Belongs to the ATPase alpha/beta chains family. In terms of assembly, F-type ATPases have 2 components, CF(1) - the catalytic core - and CF(0) - the membrane proton channel. CF(1) has five subunits: alpha(3), beta(3), gamma(1), delta(1), epsilon(1). CF(0) has three main subunits: a(1), b(2) and c(9-12). The alpha and beta chains form an alternating ring which encloses part of the gamma chain. CF(1) is attached to CF(0) by a central stalk formed by the gamma and epsilon chains, while a peripheral stalk is formed by the delta and b chains.

Its subcellular location is the cell inner membrane. The enzyme catalyses ATP + H2O + 4 H(+)(in) = ADP + phosphate + 5 H(+)(out). In terms of biological role, produces ATP from ADP in the presence of a proton gradient across the membrane. The alpha chain is a regulatory subunit. In Burkholderia pseudomallei (strain 1106a), this protein is ATP synthase subunit alpha 2.